The following is a 385-amino-acid chain: Protein pelota homolog (385 aa).

This sequence belongs to the eukaryotic release factor 1 family. Pelota subfamily. As to quaternary structure, component of the Pelota-HBS1L complex, also named Dom34-Hbs1 complex, composed of PELO and HBS1L. The cofactor is a divalent metal cation.

The protein resides in the cytoplasm. Functionally, component of the Pelota-HBS1L complex, a complex that recognizes stalled ribosomes and triggers the No-Go Decay (NGD) pathway. In the Pelota-HBS1L complex, PELO recognizes ribosomes stalled at the 3' end of an mRNA and engages stalled ribosomes by destabilizing mRNA in the mRNA channel. Following mRNA extraction from stalled ribosomes by the SKI complex, the Pelota-HBS1L complex promotes recruitment of ABCE1, which drives the disassembly of stalled ribosomes, followed by degradation of damaged mRNAs as part of the NGD pathway. In Danio rerio (Zebrafish), this protein is Protein pelota homolog (pelo).